Here is a 1117-residue protein sequence, read N- to C-terminus: Sodium-driven chloride bicarbonate exchanger (1117 aa).

A compositionally biased stretch (polar residues) spans 1-14; that stretch reads MQSGTCESFQSLSH. 4 disordered regions span residues 1-26, 57-94, 244-312, and 456-475; these read MQSGTCESFQSLSHQRNDEEAVVDRG, GRKSHRRHRHRGHKHRKRDRERDSGLEDGRESPSFDTP, KQSE…PHQQ, and NGTAAHGEAEPHGGHSGPEL. The Cytoplasmic segment spans residues 1–508; that stretch reads MQSGTCESFQ…DFTDALSLQC (508 aa). Basic and acidic residues predominate over residues 15 to 26; sequence QRNDEEAVVDRG. A compositionally biased stretch (basic residues) spans 58 to 75; sequence RKSHRRHRHRGHKHRKRD. Residues 76-89 are compositionally biased toward basic and acidic residues; that stretch reads RERDSGLEDGRESP. Phosphoserine is present on serine 88. At threonine 93 the chain carries Phosphothreonine. Over residues 247–263 the composition is skewed to polar residues; that stretch reads EPNSMDKNAGQVVSPQS. Serine 275 is modified (phosphoserine). The helical transmembrane segment at 509-529 threads the bilayer; that stretch reads LASFLFLYCACMSPVITFGGL. Residues 530 to 537 lie on the Extracellular side of the membrane; sequence LGEATEGR. The helical transmembrane segment at 538 to 558 threads the bilayer; that stretch reads ISAIESLFGASMTGIAYSLFG. Residues 559-561 are Cytoplasmic-facing; that stretch reads GQP. Residues 562-582 form a helical membrane-spanning segment; that stretch reads LTILGSTGPVLVFEKILFKFC. The Extracellular segment spans residues 583–595; the sequence is KEYGLSYLSLRAS. A helical transmembrane segment spans residues 596–616; that stretch reads IGLWTATLCIILVATDASSLV. Over 617–625 the chain is Cytoplasmic; it reads CYITRFTEE. The helical transmembrane segment at 626–646 threads the bilayer; it reads AFASLICIIFIYEALEKLFEL. The Extracellular segment spans residues 647 to 719; the sequence is SEAYPINMHN…VGRACGHEHP (73 aa). Asparagine 673, asparagine 676, asparagine 686, and asparagine 696 each carry an N-linked (GlcNAc...) asparagine glycan. The chain crosses the membrane as a helical span at residues 720–740; it reads YVPDVLFWSVILFFSTVTLSA. Residues 741 to 761 lie on the Cytoplasmic side of the membrane; sequence TLKQFKTSRYFPTKVRSIVSD. The chain crosses the membrane as a helical span at residues 762-782; it reads FAVFLTILCMVLIDYAIGIPS. The Extracellular portion of the chain corresponds to 783–808; that stretch reads PKLQVPSVFKPTRDDRGWFVTPLGPN. Residues 809 to 829 traverse the membrane as a helical segment; it reads PWWTVIAAIIPALLCTILIFM. Topologically, residues 830–854 are cytoplasmic; that stretch reads DQQITAVIINRKEHKLKKGCGYHLD. Residues 855-875 traverse the membrane as a helical segment; it reads LLMVAVMLGVCSIMGLPWFVA. Residues 876-911 are Extracellular-facing; that stretch reads ATVLSITHVNSLKLESECSAPGEQPKFLGIREQRVT. The chain crosses the membrane as a helical span at residues 912–932; it reads GLMIFILMGSSVFMTSILKFI. At 933–934 the chain is on the cytoplasmic side; that stretch reads PM. A helical membrane pass occupies residues 935–955; sequence PVLYGVFLYMGASSLKGIQFF. At 956-997 the chain is on the extracellular side; sequence DRIKLFWMPAKHQPDFIYLRHVPLRKVHLFTVIQMSCLGLLW. Residues 998–1018 traverse the membrane as a helical segment; that stretch reads IIKVSRAAIVFPMMVLALVFV. At 1019-1117 the chain is on the cytoplasmic side; the sequence is RKLMDFLFTK…SSFPSKSSPS (99 aa). Phosphoserine is present on residues serine 1056 and serine 1084.

Belongs to the anion exchanger (TC 2.A.31) family. In terms of processing, N-glycosylated.

Its subcellular location is the basolateral cell membrane. The protein resides in the apical cell membrane. It is found in the cell projection. It localises to the dendrite. The protein localises to the axon. Its subcellular location is the perikaryon. The protein resides in the presynapse. It is found in the postsynapse. Its function is as follows. Sodium/bicarbonate cotransporter which plays an important role in regulating intracellular pH. Has been shown to act as a sodium/bicarbonate cotransporter in exchange for intracellular chloride. Has also been shown to act as a sodium/biocarbonate cotransporter which does not couple net influx of bicarbonate to net efflux of chloride, with the observed chloride efflux being due to chloride self-exchange. Controls neuronal pH and may contribute to the secretion of cerebrospinal fluid. Acting on presynaptic intracellular pH, it promotes GABA release, reduces the excitability of CA1 pyramidal neurons, and modulates short-term synaptic plasticity. Required in retinal cells to maintain normal pH which is necessary for normal vision. In the kidney, likely to mediate bicarbonate reclamation in the apical membrane of the proximal tubules. The chain is Sodium-driven chloride bicarbonate exchanger from Bos taurus (Bovine).